A 640-amino-acid chain; its full sequence is 2-hydroxyacyl-CoA lyase 2 (640 aa).

Residues Val-2–Val-22 traverse the membrane as a helical segment. Glu-102 contributes to the thiamine diphosphate binding site. Positions Asp-477 to Cys-557 are thiamine pyrophosphate binding. The Mg(2+) site is built by Asp-528 and Asn-554.

This sequence belongs to the TPP enzyme family. Mg(2+) is required as a cofactor. The cofactor is thiamine diphosphate.

The protein localises to the endoplasmic reticulum membrane. It catalyses the reaction 2-hydroxyoctadecanoyl-CoA = heptadecanal + formyl-CoA. The catalysed reaction is (2R)-hydroxyhexadecanoyl-CoA = pentadecanal + formyl-CoA. Its function is as follows. Endoplasmic reticulum 2-OH acyl-CoA lyase involved in the cleavage (C1 removal) reaction in the fatty acid alpha-oxydation in a thiamine pyrophosphate (TPP)-dependent manner. This Caenorhabditis elegans protein is 2-hydroxyacyl-CoA lyase 2.